Consider the following 837-residue polypeptide: Leucine-zipper-like transcriptional regulator 1 (837 aa).

Alanine 2 carries the N-acetylalanine modification. Kelch repeat units follow at residues 76–125 (AIYV…VYGS), 127–182 (MFVF…VYSD), 184–235 (LWIF…VCRD), 236–282 (KMFV…QRRY), 292–338 (HLYV…PERA), and 396–447 (AMYI…FVLG). The segment at 324 to 352 (SSDSEVGGAEMPERASSSEDASTLTSEER) is disordered. 2 BTB domains span residues 440-534 (CDVE…KYPR) and 664-733 (CDIT…NMPP).

It belongs to the LZTR1 family. In terms of assembly, homodimer. Component of the BCR(LZTR1) E3 ubiquitin ligase complex, at least composed of CUL3, LZTR1 and RBX1. Interacts with Ras (K-Ras/KRAS, N-Ras/NRAS and H-Ras/HRAS). Interacts with RAF1. Interacts with SHOC2. Interacts with PPP1CB. In terms of processing, phosphorylated on tyrosine upon induction of apoptosis, leading to its degradation by the proteasome. Widely expressed.

Its subcellular location is the endomembrane system. The protein localises to the recycling endosome. It localises to the golgi apparatus. Its pathway is protein modification; protein ubiquitination. Its function is as follows. Substrate-specific adapter of a BCR (BTB-CUL3-RBX1) E3 ubiquitin-protein ligase complex that mediates ubiquitination of Ras (K-Ras/KRAS, N-Ras/NRAS and H-Ras/HRAS). Is a negative regulator of RAS-MAPK signaling that acts by controlling Ras levels and decreasing Ras association with membranes. In Mus musculus (Mouse), this protein is Leucine-zipper-like transcriptional regulator 1.